The following is a 435-amino-acid chain: Beta-arrestin arr-1 (435 aa).

Residues 358 to 382 (LTHSKPPESPERTDRGLPSIEATNG) form a disordered region. Positions 362-372 (KPPESPERTDR) are enriched in basic and acidic residues. The Clathrin box signature appears at 390 to 394 (LIQLH). The [DE]-X(1,2)-F-X-X-[FL]-X-X-X-R motif motif lies at 404-414 (DLIFEDFARMR). A disordered region spans residues 416-435 (HGNDSEDQPSPSANLPPSLL). A compositionally biased stretch (low complexity) spans 424–435 (PSPSANLPPSLL).

This sequence belongs to the arrestin family. In terms of assembly, component of a complex composed of arr-1, daf-18 and mpz-1. Within the complex, interacts (via C-terminus) with mpz-1 (via PDZ domain) and phosphatase daf-18. May interact (via C-terminus) with clathrin chc-1 and beta-2 adaptin (AP2) apb-1. As to expression, expressed in head neurons, nerve ring and ventral nerve cord (at protein level). Expressed in the nervous system including the nerve ring and the ventral and dorsal nerve cords. Highly expressed in amphid chemosensory neurons AWA, AWB, AWC, ADL and ASH, and in hermaphrodite specific neuron HSN. Also expressed in the intestine.

Its subcellular location is the perikaryon. The protein localises to the cell projection. The protein resides in the dendrite. Functionally, adapter protein required for olfactory adaptation and recovery to volatile odorants, probably by desensitization of G-protein coupled receptors (GPCR). May play a role in clathrin-mediated GPCR endocytosis. Acts as a positive regulator of insulin-like daf-2 signaling pathway probably by forming a complex with mpz-1 and phosphatase daf-18 likely resulting in daf-18 inhibition. Involved in egg-laying. This Caenorhabditis elegans protein is Beta-arrestin arr-1.